Consider the following 420-residue polypeptide: UDP-glucuronic acid decarboxylase 1 (420 aa).

The residue at position 1 (Met-1) is an N-acetylmethionine. At 1-19 (MVSKGLLRLVSSVNRRRMK) the chain is on the cytoplasmic side. The helical; Signal-anchor for type II membrane protein transmembrane segment at 20–40 (LLLGIALFAYAASVWGNFVNM) threads the bilayer. Residues 41–420 (RSIQENGELK…RVKKGRTRHS (380 aa)) lie on the Lumenal side of the membrane. A Phosphothreonine modification is found at Thr-94. The NAD(+) site is built by Gly-98, Phe-99, Val-100, Asp-119, Asn-120, Phe-122, Thr-123, Gly-124, Asp-144, and Val-145. Positions 149 and 150 each coordinate UDP-alpha-D-glucuronate. NAD(+) is bound by residues Leu-159 and Ser-161. Residue Lys-177 coordinates UDP-alpha-D-glucuronate. Position 178 (Thr-178) interacts with NAD(+). 4 residues coordinate UDP-alpha-D-glucuronate: Asn-185, Gly-188, Lys-191, and Arg-192. Positions 200, 231, and 235 each coordinate NAD(+). Catalysis depends on Tyr-231, which acts as the Proton acceptor. Residues Tyr-245, Gln-248, and Glu-249 each contribute to the UDP-alpha-D-glucuronate site. NAD(+) contacts are provided by Thr-261, His-267, and Arg-272. An N-linked (GlcNAc...) asparagine glycan is attached at Asn-316.

The protein belongs to the NAD(P)-dependent epimerase/dehydratase family. UDP-glucuronic acid decarboxylase subfamily. As to quaternary structure, homodimer and homotetramer. Interacts with AKT1. NAD(+) is required as a cofactor.

The protein resides in the golgi apparatus. The protein localises to the golgi stack membrane. The catalysed reaction is UDP-alpha-D-glucuronate + H(+) = UDP-alpha-D-xylose + CO2. It participates in nucleotide-sugar biosynthesis; UDP-alpha-D-xylose biosynthesis; UDP-alpha-D-xylose from UDP-alpha-D-glucuronate: step 1/1. In terms of biological role, catalyzes the NAD-dependent decarboxylation of UDP-glucuronic acid to UDP-xylose. Necessary for the biosynthesis of the core tetrasaccharide in glycosaminoglycan biosynthesis. The chain is UDP-glucuronic acid decarboxylase 1 (Uxs1) from Mus musculus (Mouse).